The primary structure comprises 309 residues: Malate dehydrogenase (309 aa).

NAD(+) contacts are provided by residues glycine 10 to glycine 15 and aspartate 34. Residues arginine 83 and arginine 89 each coordinate substrate. NAD(+)-binding positions include asparagine 96 and valine 119–asparagine 121. Substrate-binding residues include asparagine 121 and arginine 152. The active-site Proton acceptor is histidine 176.

Belongs to the LDH/MDH superfamily. MDH type 3 family.

The enzyme catalyses (S)-malate + NAD(+) = oxaloacetate + NADH + H(+). Catalyzes the reversible oxidation of malate to oxaloacetate. This Heliobacterium modesticaldum (strain ATCC 51547 / Ice1) protein is Malate dehydrogenase.